A 187-amino-acid chain; its full sequence is Ribosome-recycling factor (187 aa).

Belongs to the RRF family.

The protein resides in the cytoplasm. Responsible for the release of ribosomes from messenger RNA at the termination of protein biosynthesis. May increase the efficiency of translation by recycling ribosomes from one round of translation to another. This chain is Ribosome-recycling factor, found in Orientia tsutsugamushi (strain Boryong) (Rickettsia tsutsugamushi).